The following is a 284-amino-acid chain: 4-hydroxybenzoate octaprenyltransferase (284 aa).

A run of 9 helical transmembrane segments spans residues 19 to 39 (IPIL…SHGL), 42 to 62 (ISYL…GCII), 85 to 105 (GQLS…VAFI), 107 to 127 (VLFL…LAIL), 134 to 154 (FFAI…FMAF), 165 to 185 (AWIF…IYAL), 211 to 231 (ILLF…YCDF), 233 to 253 (SFFY…YFLY), and 261 to 281 (CINA…IAVI).

It belongs to the UbiA prenyltransferase family. The cofactor is Mg(2+).

It localises to the cell inner membrane. It catalyses the reaction all-trans-octaprenyl diphosphate + 4-hydroxybenzoate = 4-hydroxy-3-(all-trans-octaprenyl)benzoate + diphosphate. Its pathway is cofactor biosynthesis; ubiquinone biosynthesis. Functionally, catalyzes the prenylation of para-hydroxybenzoate (PHB) with an all-trans polyprenyl group. Mediates the second step in the final reaction sequence of ubiquinone-8 (UQ-8) biosynthesis, which is the condensation of the polyisoprenoid side chain with PHB, generating the first membrane-bound Q intermediate 3-octaprenyl-4-hydroxybenzoate. The polypeptide is 4-hydroxybenzoate octaprenyltransferase (Francisella tularensis subsp. tularensis (strain FSC 198)).